The sequence spans 213 residues: Cytochrome b6 (213 aa).

The helical transmembrane segment at 30–50 (IFFCLGGLTLLCFIVQCLTGI) threads the bilayer. Cys-33 is a heme c binding site. 2 residues coordinate heme b: His-84 and His-98. 3 consecutive transmembrane segments (helical) span residues 88–108 (CQLMILLVFLHMLRVYYTGAF), 114–134 (LNWVAGCFLLVLSLALAFTGY), and 184–204 (LHVMILPAVAIIFLVAHFIMI). Heme b-binding residues include His-185 and His-200.

Belongs to the cytochrome b family. PetB subfamily. The subunits of the cytochrome bc complex are a Rieske Fe-S protein (PetC), cytochrome b6 (PetB), subunit IV (PetD), and a diheme cytochrome c (PetX). Requires heme b as cofactor. It depends on heme c as a cofactor.

Its subcellular location is the cell membrane. Component of the cytochrome bc complex which donates electrons to the photosynthetic reaction center. The polypeptide is Cytochrome b6 (Heliomicrobium gestii (Heliobacterium gestii)).